Reading from the N-terminus, the 399-residue chain is L-methionine gamma-lyase (399 aa).

Pyridoxal 5'-phosphate is bound by residues 59 to 61 (YTR) and 89 to 90 (GI). Tyr-114 provides a ligand contact to substrate. 209-211 (SAT) is a pyridoxal 5'-phosphate binding site. Lys-212 carries the N6-(pyridoxal phosphate)lysine modification. Arg-376 is a binding site for substrate.

The protein belongs to the trans-sulfuration enzymes family. L-methionine gamma-lyase subfamily. In terms of assembly, homotetramer; dimer of active dimers. Pyridoxal 5'-phosphate serves as cofactor.

It catalyses the reaction L-methionine + H2O = methanethiol + 2-oxobutanoate + NH4(+). The catalysed reaction is L-homocysteine + H2O = 2-oxobutanoate + hydrogen sulfide + NH4(+) + H(+). Functionally, catalyzes the alpha,gamma-elimination of L-methionine to produce methanethiol, 2-oxobutanoate and ammonia; methanethiol (methyl mercaptan) is considered to be one of the main causes of the oral malodor in periodontal disease and may also play a role in the pathogenicity of P.gingivalis in that disease. Is also able to catalyze the alpha,gamma-elimination of L-homocysteine. The chain is L-methionine gamma-lyase from Porphyromonas gingivalis (strain ATCC BAA-308 / W83).